Here is a 567-residue protein sequence, read N- to C-terminus: 25S rRNA (cytosine-C(5))-methyltransferase NSUN5 (567 aa).

Over residues 1 to 17 the composition is skewed to basic residues; sequence MVARRNKPKAPLVKHRF. A disordered region spans residues 1–88; that stretch reads MVARRNKPKA…KTPPATKQKF (88 aa). S-adenosyl-L-methionine is bound by residues 312-318, E336, D363, and D383; that span reads CSAPGNK. Residue C444 is the Nucleophile of the active site.

The protein belongs to the class I-like SAM-binding methyltransferase superfamily. RsmB/NOP family.

The catalysed reaction is a cytidine in 25S rRNA + S-adenosyl-L-methionine = a 5-methylcytidine in 25S rRNA + S-adenosyl-L-homocysteine + H(+). Its function is as follows. S-adenosyl-L-methionine-dependent methyltransferase that specifically methylates the C(5) position of cytosine 2268 (m5C2268) in 25S rRNA. The protein is 25S rRNA (cytosine-C(5))-methyltransferase NSUN5 of Arabidopsis thaliana (Mouse-ear cress).